The sequence spans 249 residues: Acidic leucine-rich nuclear phosphoprotein 32 family member A (249 aa).

Threonine 15 carries the phosphothreonine modification. A Phosphoserine modification is found at serine 17. LRR repeat units follow at residues 18-38, 43-64, 65-87, and 89-110; these read DVKE…EGLT, ELEF…PKLN, KLKK…AEKC, and NLTH…EPLK. Positions 123–161 constitute an LRRCT domain; that stretch reads CEVTNLNDYRENVFKLLPQLTYLDGYDRDDKEAPDSDAE. Positions 147 to 156 are enriched in basic and acidic residues; sequence GYDRDDKEAP. Residues 147–249 form a disordered region; sequence GYDRDDKEAP…EPEDEGEDDD (103 aa). The necessary for tumor-suppressive function stretch occupies residues 150–174; that stretch reads RDDKEAPDSDAEGYVEGLDDEEEDE. Positions 157–230 are enriched in acidic residues; sequence DSDAEGYVEG…DEEDEEELGE (74 aa). 2 positions are modified to phosphoserine; by CK2: serine 158 and serine 204. The interval 165 to 249 is interaction with E4F1; that stretch reads EGLDDEEEDE…EPEDEGEDDD (85 aa).

The protein belongs to the ANP32 family. Component of the SET complex, composed of at least ANP32A, APEX1, HMGB2, NME1, SET and TREX1. Directly interacts with SET. Interacts with ATXN1/SCA1. Interacts with MAP1B. Interacts with ELAVL1. Part of the INHAT (inhibitor of histone acetyltransferases) complex. Interacts with E4F1. As to quaternary structure, (Microbial infection) Interacts (via C-terminus) with influenza virus A protein PB2; this interaction promotes viral replication. In terms of assembly, (Microbial infection) Interacts (via C-terminus) with influenza virus B protein PB2; this interaction promotes viral replication. (Microbial infection) Interacts (via C-terminus) with influenza virus C protein PB2; this interaction promotes viral replication by bridging viral replicase dimers together. In terms of processing, phosphorylated on serine residues, at least in part by casein kinase 2/CK2. The N-terminus is blocked. Post-translationally, some glutamate residues are glycylated by TTLL8. This modification occurs exclusively on glutamate residues and results in a glycine chain on the gamma-carboxyl group. In terms of tissue distribution, expressed in all tissues tested. Highly expressed in kidney and skeletal muscle, moderate levels of expression in brain, placenta and pancreas, and weakly expressed in lung. Found in all regions of the brain examined (amygdala, caudate nucleus, corpus callosum, hippocampus and thalamus), with highest levels in amygdala.

The protein resides in the nucleus. Its subcellular location is the cytoplasm. It localises to the endoplasmic reticulum. Multifunctional protein that is involved in the regulation of many processes including tumor suppression, apoptosis, cell cycle progression or transcription. Promotes apoptosis by favouring the activation of caspase-9/CASP9 and allowing apoptosome formation. In addition, plays a role in the modulation of histone acetylation and transcription as part of the INHAT (inhibitor of histone acetyltransferases) complex. Inhibits the histone-acetyltranferase activity of EP300/CREBBP (CREB-binding protein) and EP300/CREBBP-associated factor by histone masking. Preferentially binds to unmodified histone H3 and sterically inhibiting its acetylation and phosphorylation leading to cell growth inhibition. Participates in other biochemical processes such as regulation of mRNA nuclear-to-cytoplasmic translocation and stability by its association with ELAVL1 (Hu-antigen R). Plays a role in E4F1-mediated transcriptional repression as well as inhibition of protein phosphatase 2A. In terms of biological role, (Microbial infection) Plays an essential role in influenza A, B and C viral genome replication. Mechanistically, mediates the assembly of the viral replicase asymmetric dimers composed of PB1, PB2 and PA via its N-terminal region. Also plays an essential role in foamy virus mRNA export from the nucleus. The protein is Acidic leucine-rich nuclear phosphoprotein 32 family member A (ANP32A) of Homo sapiens (Human).